Reading from the N-terminus, the 440-residue chain is UDP-N-acetylmuramoylalanine--D-glutamate ligase (440 aa).

Gly112–Thr118 contributes to the ATP binding site.

It belongs to the MurCDEF family.

Its subcellular location is the cytoplasm. The enzyme catalyses UDP-N-acetyl-alpha-D-muramoyl-L-alanine + D-glutamate + ATP = UDP-N-acetyl-alpha-D-muramoyl-L-alanyl-D-glutamate + ADP + phosphate + H(+). Its pathway is cell wall biogenesis; peptidoglycan biosynthesis. In terms of biological role, cell wall formation. Catalyzes the addition of glutamate to the nucleotide precursor UDP-N-acetylmuramoyl-L-alanine (UMA). The sequence is that of UDP-N-acetylmuramoylalanine--D-glutamate ligase from Blochmanniella pennsylvanica (strain BPEN).